The following is a 318-amino-acid chain: MKNLNLVALPHFVSVENLKNDEVKALIKRAEYFKKSGAVARLTSPVYVTNMFFEDSSRTHTSFEMAERKLGLTVIPFDPAHSSVNKGETLYDTSLVMNALGIDLEVIRHSQNEYYEDLINLKQHQKLNIGVINAGDGSGQHPSQCMLDMMTIHEHFGHFKGLKVAIVGDITNSRVAKSDMELLTRLGAEVYFSGPEYWYSKDFDQYGKYEELDKLIPEMDVMMLLRVQHERHSGDPNEKKFDAHRYHEKYGINHKRYEAMKKDTIIMHPGPINHDVELSGDLVESDKCMFVRQMENGVFMRMAMLEAVLRGRKLGGLE.

2 residues coordinate carbamoyl phosphate: Arg-58 and Thr-59. An L-aspartate-binding site is contributed by Lys-86. Carbamoyl phosphate-binding residues include Arg-108, His-141, and Gln-144. Residues Arg-174 and Arg-226 each contribute to the L-aspartate site. Positions 270 and 271 each coordinate carbamoyl phosphate.

Belongs to the aspartate/ornithine carbamoyltransferase superfamily. ATCase family. As to quaternary structure, heterododecamer (2C3:3R2) of six catalytic PyrB chains organized as two trimers (C3), and six regulatory PyrI chains organized as three dimers (R2).

It catalyses the reaction carbamoyl phosphate + L-aspartate = N-carbamoyl-L-aspartate + phosphate + H(+). It functions in the pathway pyrimidine metabolism; UMP biosynthesis via de novo pathway; (S)-dihydroorotate from bicarbonate: step 2/3. Functionally, catalyzes the condensation of carbamoyl phosphate and aspartate to form carbamoyl aspartate and inorganic phosphate, the committed step in the de novo pyrimidine nucleotide biosynthesis pathway. In Lactobacillus helveticus (strain DPC 4571), this protein is Aspartate carbamoyltransferase catalytic subunit.